The following is a 216-amino-acid chain: ADP-sugar pyrophosphatase (216 aa).

Position 1 is an N-acetylmethionine (Met-1). A phosphoserine mark is found at Ser-3 and Ser-10. Residue Trp-28 coordinates substrate. Lys-42 is covalently cross-linked (Glycyl lysine isopeptide (Lys-Gly) (interchain with G-Cter in SUMO2)). Residue Thr-45 is modified to Phosphothreonine. Substrate contacts are provided by residues 46–47 (WE) and Arg-51. Residues 57–194 (QTADGVAVIP…EEHLTVDARV (138 aa)) enclose the Nudix hydrolase domain. Residue Tyr-74 is modified to Phosphotyrosine. Residue Arg-84 coordinates substrate. Ala-96 is a Mg(2+) binding site. The Nudix box signature appears at 97 to 118 (GLIDDGETPEAAALRELEEETG). Leu-98 serves as a coordination point for substrate. Residues Glu-112 and Glu-116 each contribute to the Mg(2+) site. Residue Asp-133 coordinates substrate. Glu-163 is a Mg(2+) binding site. Residues Lys-207 and Lys-215 each carry the N6-acetyllysine modification.

This sequence belongs to the Nudix hydrolase family. Homodimer. Interacts with PARG. It depends on Mg(2+) as a cofactor. In terms of processing, phosphorylation at Thr-45 is required for homodimer stability; dephosphorylation results in destabilization of the homodimer. Dephosphorylation at Thr-45 promotes the ATP-synthesis activity.

Its subcellular location is the nucleus. It catalyses the reaction D-ribose 5-phosphate + ATP + H(+) = ADP-D-ribose + diphosphate. It carries out the reaction ADP-D-ribose + H2O = D-ribose 5-phosphate + AMP + 2 H(+). The enzyme catalyses 8-oxo-dGDP + H2O = 8-oxo-dGMP + phosphate + H(+). Functionally, enzyme that can either act as an ADP-sugar pyrophosphatase in absence of diphosphate or catalyze the synthesis of ATP in presence of diphosphate. In absence of diphosphate, hydrolyzes with similar activities various modified nucleoside diphosphates such as ADP-ribose, ADP-mannose, ADP-glucose, 8-oxo-GDP and 8-oxo-dGDP. Can also hydrolyze other nucleotide sugars with low activity. In presence of diphosphate, mediates the synthesis of ATP in the nucleus by catalyzing the conversion of ADP-ribose to ATP and ribose 5-phosphate. Nuclear ATP synthesis takes place when dephosphorylated at Thr-45. Nuclear ATP generation is required for extensive chromatin remodeling events that are energy-consuming. Does not play a role in U8 snoRNA decapping activity. Binds U8 snoRNA. This Pongo abelii (Sumatran orangutan) protein is ADP-sugar pyrophosphatase.